Reading from the N-terminus, the 459-residue chain is MRPPSPPHVRWLCVLAGALACALRPAGSQAASPQHECEYLQLIEIQRQQCLEEAQLENETTGCSKMWDNLTCWPTTPRGQAVVLDCPLIFQLFAPIHGYNISRSCTEEGWSQLEPGPYHIACGLNDRASSLDEQQQTKFYNTVKTGYTIGYSLSLASLLVAMAILSLFRKLHCTRNYIHMHLFMSFILRATAVFIKDMALFNSGEIDHCSEASVGCKAAVVFFQYCVMANFFWLLVEGLYLYTLLAVSFFSERKYFWGYILIGWGVPSVFITIWTVVRIYFEDFGCWDTIINSSLWWIIKAPILLSILVNFVLFICIIRILVQKLRPPDIGKNDSSPYSRLAKSTLLLIPLFGIHYVMFAFFPDNFKAQVKMVFELVVGSFQGFVVAILYCFLNGEVQAELRRKWRRWHLQGVLGWSSKSQHPWGGSNGATCSTQVSMLTRVSPSARRSSSFQAEVSLV.

Positions 1–30 (MRPPSPPHVRWLCVLAGALACALRPAGSQA) are cleaved as a signal peptide. Over 31–142 (ASPQHECEYL…EQQQTKFYNT (112 aa)) the chain is Extracellular. 5 disulfides stabilise this stretch: Cys37/Cys209, Cys50/Cys72, Cys63/Cys105, Cys86/Cys122, and Cys216/Cys286. N-linked (GlcNAc...) asparagine glycans are attached at residues Asn58, Asn69, and Asn100. A helical membrane pass occupies residues 143-167 (VKTGYTIGYSLSLASLLVAMAILSL). Residues 168 to 175 (FRKLHCTR) lie on the Cytoplasmic side of the membrane. A helical membrane pass occupies residues 176–197 (NYIHMHLFMSFILRATAVFIKD). The Extracellular segment spans residues 198–217 (MALFNSGEIDHCSEASVGCK). The chain crosses the membrane as a helical span at residues 218 to 242 (AAVVFFQYCVMANFFWLLVEGLYLY). The Cytoplasmic segment spans residues 243 to 255 (TLLAVSFFSERKY). The helical transmembrane segment at 256–277 (FWGYILIGWGVPSVFITIWTVV) threads the bilayer. Topologically, residues 278–293 (RIYFEDFGCWDTIINS) are extracellular. N-linked (GlcNAc...) asparagine glycosylation occurs at Asn292. The chain crosses the membrane as a helical span at residues 294–318 (SLWWIIKAPILLSILVNFVLFICII). At 319–340 (RILVQKLRPPDIGKNDSSPYSR) the chain is on the cytoplasmic side. A helical transmembrane segment spans residues 341 to 361 (LAKSTLLLIPLFGIHYVMFAF). Over 362–369 (FPDNFKAQ) the chain is Extracellular. A helical transmembrane segment spans residues 370 to 393 (VKMVFELVVGSFQGFVVAILYCFL). The Cytoplasmic segment spans residues 394–459 (NGEVQAELRR…SSFQAEVSLV (66 aa)).

Belongs to the G-protein coupled receptor 2 family. As to quaternary structure, interacts with ADCYAP1/PACAP; activated by both PACAP27 and PACAP38 neuropeptides. Interacts with VIP; the interaction results in VIPR1 activation. In liver, lung, intestines, thymus and brain (mostly in the cerebral cortex and hippocampus).

The protein resides in the cell membrane. G protein-coupled receptor activated by the neuropeptides vasoactive intestinal peptide (VIP) and pituitary adenylate cyclase-activating polypeptide (ADCYAP1/PACAP). Binds VIP and both PACAP27 and PACAP38 bioactive peptides with the following order of ligand affinity VIP = PACAP27 &gt; PACAP38. Ligand binding causes a conformation change that triggers signaling via guanine nucleotide-binding proteins (G proteins) and modulates the activity of downstream effectors. Activates cAMP-dependent pathway. In Rattus norvegicus (Rat), this protein is Vasoactive intestinal polypeptide receptor 1.